Consider the following 233-residue polypeptide: U2 small nuclear ribonucleoprotein A' (233 aa).

4 LRR repeats span residues 20–40 (KLTL…AITQ), 42–63 (KYQV…PKRF), 65–86 (NLQC…SFPS), and 89–110 (HITS…FKDK). Residues 122–160 (NPITEMENYRYFIIWLIPSLKVLDFKKVKQAERKTSEDM) enclose the LRRCT domain.

The protein belongs to the U2 small nuclear ribonucleoprotein A family. As to quaternary structure, associated with the spliceosome.

It localises to the nucleus. Its function is as follows. Involved in pre-mRNA splicing. This Candida albicans (strain SC5314 / ATCC MYA-2876) (Yeast) protein is U2 small nuclear ribonucleoprotein A' (LEA1).